The chain runs to 128 residues: MSSFKVAVLLIAVYGASQGTSIPGGWTRQDPTEARFLELAHFATSSQTEGREFYDTVVTVKEVETQVVAGMNYKLTIEISPSVCKIGEVQYSAEQCVPKDAQQKSTCVAVIYHVPWQNQKSVTSYRCE.

An N-terminal signal peptide occupies residues 1–19; the sequence is MSSFKVAVLLIAVYGASQG. The region spanning 29–116 is the Cystatin domain; sequence QDPTEARFLE…CVAVIYHVPW (88 aa). 2 disulfide bridges follow: C84/C96 and C107/C127.

It belongs to the cystatin family. Widely expressed. Detected in salivary glands (at protein level), gut (at protein level), ovaries, and Malpighian tubules.

It localises to the secreted. Inhibitor of cysteine proteinases with broad specificity for mammalian cathepsins, including endopeptidases (cathepsins L and S) and exopeptidases (cathepsins B, C and H). Also inhibits endogenous cathepsin B-like and cathepsin C-like proteinases. Does not inhibit human legumain. May mimic specific host-derived cystatin(s) to interfere with its/their function in controlling cathepsin-mediated proteolysis. Affects the function of antigen-presenting mouse dendritic cells by reducing the production of the pro-inflammatory cytokines TNF and interleukin-12, and proliferation of antigen-specific CD4+ T-cells, suggesting it may suppress the host adaptive immune response. It is noteworthy that immunization of mice with this protein reduces O.moubata survival in infestation experiments. The chain is Cystatin-2 from Ornithodoros moubata (Soft tick).